Consider the following 166-residue polypeptide: Amblin (166 aa).

An N-terminal signal peptide occupies residues 1–15 (MGFLVASAVLVCVTS). BPTI/Kunitz inhibitor domains are found at residues 22–72 (CKKK…REAC) and 82–132 (CKQM…MKKC). 6 disulfide bridges follow: cysteine 22-cysteine 72, cysteine 31-cysteine 55, cysteine 47-cysteine 68, cysteine 82-cysteine 132, cysteine 91-cysteine 115, and cysteine 107-cysteine 128.

The protein localises to the secreted. Its function is as follows. Thrombin-specific inhibitor from tick hemolymph (Ki=20 nM). This is Amblin from Amblyomma hebraeum (South African bont tick).